The sequence spans 360 residues: DnaJ homolog subfamily C member 25 (360 aa).

The helical transmembrane segment at 20–40 (WMLLAPLLPALLLVRPAGALV) threads the bilayer. Residues 49–124 (DCYEVLGVSR…ETRKDYDYML (76 aa)) enclose the J domain. 2 consecutive transmembrane segments (helical) span residues 150-170 (VVIL…WWNS) and 244-264 (LLLF…VWYC).

It belongs to the DNAJC25 family.

The protein resides in the membrane. The protein is DnaJ homolog subfamily C member 25 (DNAJC25) of Homo sapiens (Human).